Consider the following 318-residue polypeptide: NADH-ubiquinone oxidoreductase chain 1 (318 aa).

The next 9 membrane-spanning stretches (helical) occupy residues 2 to 22, 37 to 57, 69 to 89, 100 to 120, 136 to 156, 171 to 191, 231 to 251, 253 to 273, and 293 to 313; these read FLMNILCLVIPILLAMAFLTL, PNIVGPYGLLQPIADAIKLFI, LMFTLAPTLAFTLALSLWIPM, LGVLFILALSSLAVYSILWSG, VAQTISYEVTLAIILLSVMMM, HMWLILPLWPLAMMWFISTLA, IIMMNALTATLFLGAFHNPLF, ELFTVNFITKTLILTAIFLWV, and FLPLTLALCMLHVSIPALSAG.

It belongs to the complex I subunit 1 family. In terms of assembly, core subunit of respiratory chain NADH dehydrogenase (Complex I) which is composed of 45 different subunits.

It localises to the mitochondrion inner membrane. It carries out the reaction a ubiquinone + NADH + 5 H(+)(in) = a ubiquinol + NAD(+) + 4 H(+)(out). In terms of biological role, core subunit of the mitochondrial membrane respiratory chain NADH dehydrogenase (Complex I) which catalyzes electron transfer from NADH through the respiratory chain, using ubiquinone as an electron acceptor. Essential for the catalytic activity and assembly of complex I. The polypeptide is NADH-ubiquinone oxidoreductase chain 1 (MT-ND1) (Zaedyus pichiy (Pichi)).